A 99-amino-acid chain; its full sequence is NADH-quinone oxidoreductase subunit K (99 aa).

The next 3 helical transmembrane spans lie at 3–23 (PENY…GVLL), 28–48 (IVVF…FVTF), and 62–82 (FFTM…IMII).

This sequence belongs to the complex I subunit 4L family. As to quaternary structure, NDH-1 is composed of 14 different subunits. Subunits NuoA, H, J, K, L, M, N constitute the membrane sector of the complex.

Its subcellular location is the cell membrane. It carries out the reaction a quinone + NADH + 5 H(+)(in) = a quinol + NAD(+) + 4 H(+)(out). In terms of biological role, NDH-1 shuttles electrons from NADH, via FMN and iron-sulfur (Fe-S) centers, to quinones in the respiratory chain. The immediate electron acceptor for the enzyme in this species is believed to be a menaquinone. Couples the redox reaction to proton translocation (for every two electrons transferred, four hydrogen ions are translocated across the cytoplasmic membrane), and thus conserves the redox energy in a proton gradient. This Rhodococcus erythropolis (strain PR4 / NBRC 100887) protein is NADH-quinone oxidoreductase subunit K.